A 374-amino-acid polypeptide reads, in one-letter code: Protein Brevis radix-like 2 (374 aa).

Disordered stretches follow at residues 12-43 (NTNN…IKSL) and 57-80 (AYKS…ADSD). Residues 65 to 80 (SGSSNQNKNRSYADSD) show a composition bias toward polar residues. The region spanning 143–198 (KEWVAQVEPGVLITFVSLPEGGNDMKRIRFSREMFDKWQAQKWWAENFDKVMELYN) is the BRX 1 domain. Positions 205–316 (QSVPLPTPPR…EELSVSNASD (112 aa)) are disordered. Composition is skewed to polar residues over residues 246–259 (SSGS…TQTQ) and 267–288 (GLAT…SSVD). The span at 289–307 (ESARSSFSREEEEADHSGE) shows a compositional bias: basic and acidic residues. Residues 319-374 (TEWVEQDEAGVYITIRALPDGTRELRRVRFSREKFGETNARLWWEQNRARIQQQYL) enclose the BRX 2 domain.

This sequence belongs to the BRX family. Expressed in roots.

The protein localises to the nucleus. This Arabidopsis thaliana (Mouse-ear cress) protein is Protein Brevis radix-like 2 (BRXL2).